The chain runs to 174 residues: Putative serine protease 46 (174 aa).

The Peptidase S1 domain maps to valine 43 to glycine 174. Cysteines 68 and 84 form a disulfide. Residues histidine 83 and aspartate 128 each act as charge relay system in the active site.

It belongs to the peptidase S1 family.

This is Putative serine protease 46 from Homo sapiens (Human).